A 187-amino-acid chain; its full sequence is Large ribosomal subunit protein uL5 (187 aa).

It belongs to the universal ribosomal protein uL5 family. Part of the 50S ribosomal subunit; part of the 5S rRNA/L5/L18/L25 subcomplex. Contacts the 5S rRNA and the P site tRNA. Forms a bridge to the 30S subunit in the 70S ribosome.

In terms of biological role, this is one of the proteins that bind and probably mediate the attachment of the 5S RNA into the large ribosomal subunit, where it forms part of the central protuberance. In the 70S ribosome it contacts protein S13 of the 30S subunit (bridge B1b), connecting the 2 subunits; this bridge is implicated in subunit movement. Contacts the P site tRNA; the 5S rRNA and some of its associated proteins might help stabilize positioning of ribosome-bound tRNAs. The chain is Large ribosomal subunit protein uL5 from Mycobacterium leprae (strain Br4923).